The following is a 194-amino-acid chain: Anthranilate synthase component 2 (194 aa).

The 193-residue stretch at 2–194 folds into the Glutamine amidotransferase type-1 domain; sequence KIFFIDNFDS…QSVGFLEGLL (193 aa). 57–59 is an L-glutamine binding site; sequence GPG. Residue Cys84 is the Nucleophile; for GATase activity of the active site. Residues Gln88 and 134 to 135 contribute to the L-glutamine site; that span reads SL. Active-site for GATase activity residues include His170 and Glu172.

As to quaternary structure, heterotetramer consisting of two non-identical subunits: a beta subunit (TrpG) and a large alpha subunit (TrpE).

It carries out the reaction chorismate + L-glutamine = anthranilate + pyruvate + L-glutamate + H(+). Its pathway is amino-acid biosynthesis; L-tryptophan biosynthesis; L-tryptophan from chorismate: step 1/5. Part of a heterotetrameric complex that catalyzes the two-step biosynthesis of anthranilate, an intermediate in the biosynthesis of L-tryptophan. In the first step, the glutamine-binding beta subunit (TrpG) of anthranilate synthase (AS) provides the glutamine amidotransferase activity which generates ammonia as a substrate that, along with chorismate, is used in the second step, catalyzed by the large alpha subunit of AS (TrpE) to produce anthranilate. In the absence of TrpG, TrpE can synthesize anthranilate directly from chorismate and high concentrations of ammonia. The chain is Anthranilate synthase component 2 (trpG) from Helicobacter pylori (strain ATCC 700392 / 26695) (Campylobacter pylori).